Here is a 446-residue protein sequence, read N- to C-terminus: Chromosomal replication initiator protein DnaA (446 aa).

A domain I, interacts with DnaA modulators region spans residues 1-81; it reads MENISDLWNS…AKLAIRFIIP (81 aa). The domain II stretch occupies residues 81-109; that stretch reads PQSQAEEDIDLPSVKQKHAHDESNHLPQS. Positions 110-326 are domain III, AAA+ region; that stretch reads MLNPKYTFDT…GALIRVVAYS (217 aa). ATP contacts are provided by glycine 154, glycine 156, lysine 157, and threonine 158. A domain IV, binds dsDNA region spans residues 327 to 446; it reads SLINKDMNAD…HVEEVKDILK (120 aa).

Belongs to the DnaA family. In terms of assembly, oligomerizes as a right-handed, spiral filament on DNA at oriC.

It localises to the cytoplasm. Plays an essential role in the initiation and regulation of chromosomal replication. ATP-DnaA binds to the origin of replication (oriC) to initiate formation of the DNA replication initiation complex once per cell cycle. Binds the DnaA box (a 9 base pair repeat at the origin) and separates the double-stranded (ds)DNA. Forms a right-handed helical filament on oriC DNA; dsDNA binds to the exterior of the filament while single-stranded (ss)DNA is stabiized in the filament's interior. The ATP-DnaA-oriC complex binds and stabilizes one strand of the AT-rich DNA unwinding element (DUE), permitting loading of DNA polymerase. After initiation quickly degrades to an ADP-DnaA complex that is not apt for DNA replication. Binds acidic phospholipids. The chain is Chromosomal replication initiator protein DnaA from Bacillus mycoides (strain KBAB4) (Bacillus weihenstephanensis).